The chain runs to 720 residues: Fatty acid oxidation complex subunit alpha (720 aa).

Residues 1 to 189 (MIYQGETLSV…KLGLVDAVVA (189 aa)) form an enoyl-CoA hydratase/isomerase region. Residue D296 coordinates substrate. Residues 311-720 (QPTKKGVVLG…ESYYTQQVNA (410 aa)) form a 3-hydroxyacyl-CoA dehydrogenase region. Residues M324, D343, 400–402 (VVE), K407, and S429 each bind NAD(+). H450 serves as the catalytic For 3-hydroxyacyl-CoA dehydrogenase activity. N453 is a binding site for NAD(+). Positions 500 and 660 each coordinate substrate.

The protein in the N-terminal section; belongs to the enoyl-CoA hydratase/isomerase family. In the C-terminal section; belongs to the 3-hydroxyacyl-CoA dehydrogenase family. Heterotetramer of two alpha chains (FadB) and two beta chains (FadA).

It carries out the reaction a (3S)-3-hydroxyacyl-CoA + NAD(+) = a 3-oxoacyl-CoA + NADH + H(+). The enzyme catalyses a (3S)-3-hydroxyacyl-CoA = a (2E)-enoyl-CoA + H2O. The catalysed reaction is a 4-saturated-(3S)-3-hydroxyacyl-CoA = a (3E)-enoyl-CoA + H2O. It catalyses the reaction (3S)-3-hydroxybutanoyl-CoA = (3R)-3-hydroxybutanoyl-CoA. It carries out the reaction a (3Z)-enoyl-CoA = a 4-saturated (2E)-enoyl-CoA. The enzyme catalyses a (3E)-enoyl-CoA = a 4-saturated (2E)-enoyl-CoA. The protein operates within lipid metabolism; fatty acid beta-oxidation. Involved in the aerobic and anaerobic degradation of long-chain fatty acids via beta-oxidation cycle. Catalyzes the formation of 3-oxoacyl-CoA from enoyl-CoA via L-3-hydroxyacyl-CoA. It can also use D-3-hydroxyacyl-CoA and cis-3-enoyl-CoA as substrate. The chain is Fatty acid oxidation complex subunit alpha from Photobacterium profundum (strain SS9).